The primary structure comprises 164 residues: 2S seed storage protein 3 (164 aa).

The first 21 residues, methionine 1–alanine 21, serve as a signal peptide directing secretion. Propeptides lie at residues serine 22–asparagine 37 and glycine 73–aspartate 81.

It belongs to the 2S seed storage albumins family. The mature protein consists of a small and a large chain linked by disulfide bonds. Interacts with AHK2.

Functionally, this is a 2S seed storage protein. The sequence is that of 2S seed storage protein 3 (AT2S3) from Arabidopsis thaliana (Mouse-ear cress).